A 171-amino-acid polypeptide reads, in one-letter code: Peptidyl-prolyl cis-trans isomerase slr1251 (171 aa).

The PPIase cyclophilin-type domain maps to 6 to 169; the sequence is FFDITIGSDT…QAIVISDCGE (164 aa).

Belongs to the cyclophilin-type PPIase family.

It carries out the reaction [protein]-peptidylproline (omega=180) = [protein]-peptidylproline (omega=0). Functionally, PPIases accelerate the folding of proteins. It catalyzes the cis-trans isomerization of proline imidic peptide bonds in oligopeptides. In Synechocystis sp. (strain ATCC 27184 / PCC 6803 / Kazusa), this protein is Peptidyl-prolyl cis-trans isomerase slr1251.